The following is a 255-amino-acid chain: MALIEDAAFTRIKNRVGKAIAEFDLISEGDRVAVAVSGGKDSYTMLHMLETLRRRAPVRYELVAINIDSGYRGYRADIIEEHLREHGFTYHMEKTDHYDIISEKRRPNSSYCSICARLKRGTLYTLAQQYGCNKLALGHHMDDFIETLLLNQFFVGSLKAMAPSMLADNGVTTVIRPLVYVPEKEIIPFSRNNRFPVVCCCCPVCGTADLQRKKMKELLETLERDNPLVKKSLLTALSNVHPRHLLDKGLTRKPS.

Residues 37–42 (SGGKDS) carry the PP-loop motif motif. [4Fe-4S] cluster is bound by residues Cys112, Cys115, and Cys202.

It belongs to the TtcA family. Homodimer. It depends on Mg(2+) as a cofactor. [4Fe-4S] cluster is required as a cofactor.

It is found in the cytoplasm. It catalyses the reaction cytidine(32) in tRNA + S-sulfanyl-L-cysteinyl-[cysteine desulfurase] + AH2 + ATP = 2-thiocytidine(32) in tRNA + L-cysteinyl-[cysteine desulfurase] + A + AMP + diphosphate + H(+). The protein operates within tRNA modification. Catalyzes the ATP-dependent 2-thiolation of cytidine in position 32 of tRNA, to form 2-thiocytidine (s(2)C32). The sulfur atoms are provided by the cysteine/cysteine desulfurase (IscS) system. The polypeptide is tRNA-cytidine(32) 2-sulfurtransferase (Citrifermentans bemidjiense (strain ATCC BAA-1014 / DSM 16622 / JCM 12645 / Bem) (Geobacter bemidjiensis)).